Consider the following 395-residue polypeptide: XK-related protein 8 (395 aa).

Residues 1–12 (MPWSSRGALLRD) are Cytoplasmic-facing. A helical membrane pass occupies residues 13 to 33 (LVLGVLGTAAFLLDLGTDLWA). Topologically, residues 34–47 (AVQYALGGRYLWAA) are extracellular. Residues 48 to 68 (LVLALLGLASVALQLFSWLWL) form a helical membrane-spanning segment. The Cytoplasmic portion of the chain corresponds to 69–158 (RADPAGLHGS…VLAIMLQSGR (90 aa)). A helical transmembrane segment spans residues 159–179 (AEYYQWVGICTSFLGISWALL). Residues 180 to 200 (DYHRALRTCLPSRPLLGLGSS) lie on the Extracellular side of the membrane. Residues 201 to 221 (VIYFLWNLLLLWPRVLAVALF) traverse the membrane as a helical segment. At 222–223 (SA) the chain is on the cytoplasmic side. The chain crosses the membrane as a helical span at residues 224-244 (LFPSYVALHFLGLWLVLLLWV). The Extracellular segment spans residues 245–258 (WLQGTDFMPDPSSE). Residues 259–279 (WLYQVTVATILYFSWFNVAEG) traverse the membrane as a helical segment. Residues 280–284 (RTRGR) lie on the Cytoplasmic side of the membrane. A helical transmembrane segment spans residues 285–305 (AIIHFAFLLSDSILLVATWVT). Topologically, residues 306 to 312 (HSSWLPS) are extracellular. The helical transmembrane segment at 313–333 (GIPLQLWLPVGCGCFFLGLAL) threads the bilayer. Topologically, residues 334 to 395 (RLVYYHWLHP…KDEAALPVKG (62 aa)) are cytoplasmic. Serine 362 carries the phosphoserine modification. At threonine 375 the chain carries Phosphothreonine.

The protein belongs to the XK family. As to quaternary structure, interacts with BSG and NPTN; which act as chaperones to localize XKR8 at the cell membrane. Homodimer. Post-translationally, undergoes proteolytic processing by caspase-3 (CASP3), leading to its activation. In terms of processing, phosphorylation at Thr-375 activates the phospholipid scramblase activity.

It localises to the cell membrane. The protein localises to the cytoplasm. The protein resides in the perinuclear region. It catalyses the reaction a 1,2-diacyl-sn-glycero-3-phospho-L-serine(in) = a 1,2-diacyl-sn-glycero-3-phospho-L-serine(out). With respect to regulation, activated upon caspase cleavage to generate the XK-related protein 8, processed form. Does not act prior the onset of apoptosis. Functionally, phospholipid scramblase that promotes phosphatidylserine exposure on apoptotic cell surface. Phosphatidylserine is a specific marker only present at the surface of apoptotic cells and acts as a specific signal for engulfment. Required for the clearance of apoptotic cells, such as engulfment of apoptotic germ cells by Sertoli cells, clearance of senescent neutrophils or regulation of bipolar cell numbers in the retina. Has no effect on calcium-induced exposure of phosphatidylserine. Promotes myoblast differentiation and survival. The sequence is that of XK-related protein 8 from Pan troglodytes (Chimpanzee).